The primary structure comprises 142 residues: Large ribosomal subunit protein uL13 (142 aa).

Belongs to the universal ribosomal protein uL13 family. In terms of assembly, part of the 50S ribosomal subunit.

Its function is as follows. This protein is one of the early assembly proteins of the 50S ribosomal subunit, although it is not seen to bind rRNA by itself. It is important during the early stages of 50S assembly. The protein is Large ribosomal subunit protein uL13 of Aeromonas salmonicida (strain A449).